The primary structure comprises 414 residues: DNA primase large subunit PriL (414 aa).

[4Fe-4S] cluster-binding residues include Cys-251, Cys-352, Cys-370, and Cys-376.

This sequence belongs to the eukaryotic-type primase large subunit family. As to quaternary structure, heterodimer of a small subunit (PriS) and a large subunit (PriL). Requires [4Fe-4S] cluster as cofactor.

Regulatory subunit of DNA primase, an RNA polymerase that catalyzes the synthesis of short RNA molecules used as primers for DNA polymerase during DNA replication. Stabilizes and modulates the activity of the small subunit, increasing the rate of DNA synthesis, and conferring RNA synthesis capability. The DNA polymerase activity may enable DNA primase to also catalyze primer extension after primer synthesis. May also play a role in DNA repair. The polypeptide is DNA primase large subunit PriL (Methanocaldococcus jannaschii (strain ATCC 43067 / DSM 2661 / JAL-1 / JCM 10045 / NBRC 100440) (Methanococcus jannaschii)).